Reading from the N-terminus, the 247-residue chain is UDP-2,3-diacylglucosamine hydrolase (247 aa).

Mn(2+) contacts are provided by Asp-8, His-10, Asp-41, Asn-79, and His-114. 79 to 80 (NR) serves as a coordination point for substrate. Positions 122, 160, 171, 174, and 202 each coordinate substrate. Mn(2+)-binding residues include His-202 and His-204.

Belongs to the LpxH family. Mn(2+) is required as a cofactor.

It is found in the cell inner membrane. It catalyses the reaction UDP-2-N,3-O-bis[(3R)-3-hydroxytetradecanoyl]-alpha-D-glucosamine + H2O = 2-N,3-O-bis[(3R)-3-hydroxytetradecanoyl]-alpha-D-glucosaminyl 1-phosphate + UMP + 2 H(+). It participates in glycolipid biosynthesis; lipid IV(A) biosynthesis; lipid IV(A) from (3R)-3-hydroxytetradecanoyl-[acyl-carrier-protein] and UDP-N-acetyl-alpha-D-glucosamine: step 4/6. Hydrolyzes the pyrophosphate bond of UDP-2,3-diacylglucosamine to yield 2,3-diacylglucosamine 1-phosphate (lipid X) and UMP by catalyzing the attack of water at the alpha-P atom. Involved in the biosynthesis of lipid A, a phosphorylated glycolipid that anchors the lipopolysaccharide to the outer membrane of the cell. This is UDP-2,3-diacylglucosamine hydrolase from Xanthomonas oryzae pv. oryzae (strain MAFF 311018).